The chain runs to 377 residues: MWSGPPQQDEGLPVGLSAISVPWKNLGPSKGNRKSPGGLVEASASWEEAGGEEHPAAAPLDVSRLRSSSMEIREKGSEFLKEELYKAQKELKLKDEECERLCKVRAQLEQELEELTASLFEEAHKMVREANMKQAASEKQLKEAWGKIDMLQAEVTALKTLVITSTPASPNRELHPQLLSPTKAGPRKGHSRQKSTSSLCPVVCPTAGHIPTPDKEGKEVDTTLFAEFQAWRASPTLDKNCPFLERVYREDVGPCLDFTVQELSALVRTAVEDNTLTIEPVASQTLPNVECNNTNTCALSGLARTCHHRIRLGDSDGHYYISPSSRARITAVCNFFTYVRYIQQGLVRQDAEPMFWEIMRLRKGMSLAKLGFFPQEA.

A disordered region spans residues 23-57 (WKNLGPSKGNRKSPGGLVEASASWEEAGGEEHPAA). The stretch at 77-128 (SEFLKEELYKAQKELKLKDEECERLCKVRAQLEQELEELTASLFEEAHKMVR) forms a coiled coil. The segment at 167–198 (PASPNRELHPQLLSPTKAGPRKGHSRQKSTSS) is disordered. Phosphoserine is present on residues S169 and S180.

This sequence belongs to the SEC2 family. As to quaternary structure, interacts with RAB3A and IHPK1 through the coiled-coil domain. This interaction is competitive. IHPK1 kinase activity is not required for this interaction. As to expression, selectively localized to the brain (at protein level).

In terms of biological role, guanine nucleotide exchange factor (GEF) which may activate RAB3A, a GTPase that regulates synaptic vesicle exocytosis. Promotes the exchange of GDP to GTP, converting inactive GDP-bound Rab proteins into their active GTP-bound form. May also activate RAB8A and RAB8B. In Rattus norvegicus (Rat), this protein is Guanine nucleotide exchange factor for Rab-3A (Rab3il1).